Reading from the N-terminus, the 466-residue chain is Probable aminotransferase Rv3329 (466 aa).

At Lys294 the chain carries N6-(pyridoxal phosphate)lysine.

The protein belongs to the class-III pyridoxal-phosphate-dependent aminotransferase family. Pyridoxal 5'-phosphate is required as a cofactor.

In terms of biological role, probable aminotransferase. In Mycobacterium tuberculosis (strain ATCC 25618 / H37Rv), this protein is Probable aminotransferase Rv3329.